The chain runs to 151 residues: Class I hydrophobin A (151 aa).

The N-terminal stretch at Met1–Ala17 is a signal peptide. Cystine bridges form between Cys52-Cys125, Cys60-Cys119, Cys61-Cys101, and Cys126-Cys144.

Belongs to the fungal hydrophobin family. Interacts with cutinase cutL1 in a pH-dependent manner. Self-assembles to form functional amyloid fibrils called rodlets. Self-assembly into fibrillar rodlets occurs spontaneously at hydrophobic:hydrophilic interfaces and the rodlets further associate laterally to form amphipathic monolayers. rolA rodlet formation is regulated by the strength of ionic interactions between rolA molecules. Three types of self-assembled structures of rolA are observed: spherical, rod-like, and mesh-like.

The protein localises to the secreted. Its subcellular location is the cell wall. Its function is as follows. Aerial growth, conidiation, and dispersal of filamentous fungi in the environment rely upon a capability of their secreting small amphipathic proteins called hydrophobins (HPBs) with low sequence identity. Class I can self-assemble into an outermost layer of rodlet bundles on aerial cell surfaces, conferring cellular hydrophobicity that supports fungal growth, development and dispersal; whereas Class II form highly ordered films at water-air interfaces through intermolecular interactions but contribute nothing to the rodlet structure. RolA is a class I hydrophobin that undergoes a conformational change after its adsorption to hydrophobic surfaces such as the biodegradable polyester polybutylene succinate-coadipate (PBSA) and recruits the cutinase cutL1, resulting in condensation of cutL1 on the PBSA surface and consequent stimulation of PBSA hydrolysis. Increases also the activity of polyethylene terephthalate hydrolase (PETase) that hydrolyzes polyethylene terephthalate (PET), one of the most well-known polyesters that is widely used as packaging material, when the PET samples are preincubated with the hydrophobin. The wetting effect of rolA probably acts on PET surface to become hydrophilic, which leads PETase easier to contact and attack the surface. In Aspergillus oryzae (strain ATCC 42149 / RIB 40) (Yellow koji mold), this protein is Class I hydrophobin A.